Consider the following 388-residue polypeptide: Cytochrome b (388 aa).

Transmembrane regions (helical) follow at residues 38–58 (FGCL…FLAM), 82–104 (WLLR…LHIF), 119–139 (VWCL…IGYV), and 185–205 (FFSL…LHLA). Positions 88 and 102 each coordinate heme b. 2 residues coordinate heme b: histidine 189 and histidine 203. Histidine 208 serves as a coordination point for a ubiquinone. Transmembrane regions (helical) follow at residues 231-251 (FYVK…IWIF), 295-315 (AGGV…PFFK), 327-347 (IHQG…WIGC), and 354-373 (FVTI…AITP).

Belongs to the cytochrome b family. The main subunits of complex b-c1 are: cytochrome b, cytochrome c1 and the Rieske protein. The cofactor is heme b.

It is found in the mitochondrion inner membrane. Component of the ubiquinol-cytochrome c reductase complex (complex III or cytochrome b-c1 complex) that is part of the mitochondrial respiratory chain. The b-c1 complex mediates electron transfer from ubiquinol to cytochrome c. Contributes to the generation of a proton gradient across the mitochondrial membrane that is then used for ATP synthesis. The protein is Cytochrome b (MT-CYB) of Zea mays (Maize).